Reading from the N-terminus, the 372-residue chain is L-selectin (372 aa).

Positions 1-28 are cleaved as a signal peptide; the sequence is MIFPWKCQSTQRDLWNIFKLWGWTMLCC. The propeptide occupies 29-38; it reads DFLAHHGTDC. At 39–332 the chain is on the extracellular side; sequence WTYHYSEKPM…FSMIKEGDYN (294 aa). Residues 55-155 enclose the C-type lectin domain; the sequence is RFCRDNYTDL…ACHKLKAALC (101 aa). Intrachain disulfides connect Cys-57–Cys-155, Cys-128–Cys-147, Cys-160–Cys-171, Cys-165–Cys-180, Cys-182–Cys-191, Cys-197–Cys-241, Cys-227–Cys-254, Cys-259–Cys-303, and Cys-289–Cys-316. N-linked (GlcNAc...) asparagine glycans are attached at residues Asn-60 and Asn-104. The Ca(2+) site is built by Glu-118, Asn-120, Glu-126, Asn-143, and Asp-144. The 37-residue stretch at 156–192 folds into the EGF-like domain; that stretch reads YTASCQPWSCSGHGECVEIINNYTCNCDVGYYGPQCQ. Residue Asn-177 is glycosylated (N-linked (GlcNAc...) asparagine). Sushi domains follow at residues 195–256 and 257–318; these read IQCE…TCQV and IQCE…ICQK. N-linked (GlcNAc...) asparagine glycans are attached at residues Asn-232, Asn-246, and Asn-271. Residues 333 to 355 traverse the membrane as a helical segment; sequence PLFIPVAVMVTAFSGLAFIIWLA. At 356-372 the chain is on the cytoplasmic side; that stretch reads RRLKKGKKSKRSMNDPY.

It belongs to the selectin/LECAM family. Interaction with SELPLG/PSGL1 and PODXL2 is required for promoting recruitment and rolling of leukocytes. This interaction is dependent on the sialyl Lewis X glycan modification of SELPLG and PODXL2, and tyrosine sulfation modifications of SELPLG. Sulfation on 'Tyr-51' of SELPLG is important for L-selectin binding. Post-translationally, N-glycosylated. Expressed in B-cell lines and T-lymphocytes.

Its subcellular location is the cell membrane. Calcium-dependent lectin that mediates cell adhesion by binding to glycoproteins on neighboring cells. Mediates the adherence of lymphocytes to endothelial cells of high endothelial venules in peripheral lymph nodes. Promotes initial tethering and rolling of leukocytes in endothelia. This Homo sapiens (Human) protein is L-selectin (SELL).